The following is a 229-amino-acid chain: Potassium/proton antiporter CemA (229 aa).

3 helical membrane passes run 7–27 (FTPL…SLLF), 107–127 (ILHF…SILG), and 189–209 (IISG…KYWI).

This sequence belongs to the CemA family.

It localises to the plastid. Its subcellular location is the chloroplast inner membrane. It carries out the reaction K(+)(in) + H(+)(out) = K(+)(out) + H(+)(in). In terms of biological role, contributes to K(+)/H(+) antiport activity by supporting proton efflux to control proton extrusion and homeostasis in chloroplasts in a light-dependent manner to modulate photosynthesis. Prevents excessive induction of non-photochemical quenching (NPQ) under continuous-light conditions. Indirectly promotes efficient inorganic carbon uptake into chloroplasts. The polypeptide is Potassium/proton antiporter CemA (Helianthus annuus (Common sunflower)).